A 325-amino-acid polypeptide reads, in one-letter code: tRNA N6-adenosine threonylcarbamoyltransferase (325 aa).

His110 and His114 together coordinate Fe cation. Substrate-binding positions include 133–137 (MVSGG), Asp165, Gly178, and Asn268. A Fe cation-binding site is contributed by Asp296.

It belongs to the KAE1 / TsaD family. Fe(2+) serves as cofactor.

Its subcellular location is the cytoplasm. It carries out the reaction L-threonylcarbamoyladenylate + adenosine(37) in tRNA = N(6)-L-threonylcarbamoyladenosine(37) in tRNA + AMP + H(+). Required for the formation of a threonylcarbamoyl group on adenosine at position 37 (t(6)A37) in tRNAs that read codons beginning with adenine. Is involved in the transfer of the threonylcarbamoyl moiety of threonylcarbamoyl-AMP (TC-AMP) to the N6 group of A37, together with TsaE and TsaB. TsaD likely plays a direct catalytic role in this reaction. The chain is tRNA N6-adenosine threonylcarbamoyltransferase from Thermosipho melanesiensis (strain DSM 12029 / CIP 104789 / BI429).